A 40-amino-acid polypeptide reads, in one-letter code: Photosystem II reaction center protein J (40 aa).

The helical transmembrane segment at 8–28 (IPLWLIGTVTGIPVIGSIGIF) threads the bilayer.

It belongs to the PsbJ family. PSII is composed of 1 copy each of membrane proteins PsbA, PsbB, PsbC, PsbD, PsbE, PsbF, PsbH, PsbI, PsbJ, PsbK, PsbL, PsbM, PsbT, PsbX, PsbY, PsbZ, Psb30/Ycf12, at least 3 peripheral proteins of the oxygen-evolving complex and a large number of cofactors. It forms dimeric complexes.

The protein localises to the plastid. It is found in the chloroplast thylakoid membrane. Its function is as follows. One of the components of the core complex of photosystem II (PSII). PSII is a light-driven water:plastoquinone oxidoreductase that uses light energy to abstract electrons from H(2)O, generating O(2) and a proton gradient subsequently used for ATP formation. It consists of a core antenna complex that captures photons, and an electron transfer chain that converts photonic excitation into a charge separation. The protein is Photosystem II reaction center protein J of Chloranthus spicatus (Chulantree).